A 63-amino-acid polypeptide reads, in one-letter code: Cecropin-2 (63 aa).

The N-terminal stretch at 1–23 (MNFYKVFIFVALILAISLGQSEA) is a signal peptide. The residue at position 62 (arginine 62) is an Arginine amide.

It belongs to the cecropin family.

The protein resides in the secreted. Functionally, cecropins have lytic and antibacterial activity against several Gram-positive and Gram-negative bacteria. This chain is Cecropin-2 (Cec2A), found in Drosophila virilis (Fruit fly).